The following is a 640-amino-acid chain: Protection of telomeres protein 1 (640 aa).

This sequence belongs to the telombin family. As to quaternary structure, homodimer or homooligomer. Component of the shelterin complex (telosome) composed of TERF1, TERF2, TINF2, TERF2IP, ACD and POT1. Binds single-stranded telomeric DNA as a monomer. Associated component of the telomerase holoenzyme complex. Found in a complex with TERF1, TINF2 and TNKS1. Interacts with TNKS1. Forms heterodimers with ACD. Identified in a complex with ACD and single-stranded telomeric DNA.

The protein localises to the nucleus. Its subcellular location is the chromosome. The protein resides in the telomere. Component of the telomerase ribonucleoprotein (RNP) complex that is essential for the replication of chromosome termini. Is a component of the double-stranded telomeric DNA-binding TRF1 complex which is involved in the regulation of telomere length by cis-inhibition of telomerase. Also acts as a single-stranded telomeric DNA-binding protein and thus may act as a downstream effector of the TRF1 complex and may transduce information about telomere maintenance and/or length to the telomere terminus. Component of the shelterin complex (telosome) that is involved in the regulation of telomere length and protection. Shelterin associates with arrays of double-stranded TTAGGG repeats added by telomerase and protects chromosome ends; without its protective activity, telomeres are no longer hidden from the DNA damage surveillance and chromosome ends are inappropriately processed by DNA repair pathways. Binds to two or more telomeric single-stranded 5'-TTAGGG-3' repeats (G-strand) and with high specificity to a minimal telomeric single-stranded 5'-TAGGGTTAG-3' sequence. Binds telomeric single-stranded sequences internally or at proximity of a 3'-end. Its activity is TERT dependent but it does not increase TERT activity. This is Protection of telomeres protein 1 (Pot1) from Mus musculus (Mouse).